The primary structure comprises 725 residues: Malate synthase G 2 (725 aa).

Residues Val118, 125–126 (RY), Ser276, and Arg313 contribute to the acetyl-CoA site. Arg340 serves as the catalytic Proton acceptor. Residues Arg340, Glu429, and 454–457 (GFLD) each bind glyoxylate. Residues Glu429 and Asp457 each contribute to the Mg(2+) site. Pro538 lines the acetyl-CoA pocket. Cys619 bears the Cysteine sulfenic acid (-SOH) mark. Asp633 acts as the Proton donor in catalysis.

Belongs to the malate synthase family. GlcB subfamily. In terms of assembly, monomer. The cofactor is Mg(2+).

Its subcellular location is the cytoplasm. It carries out the reaction glyoxylate + acetyl-CoA + H2O = (S)-malate + CoA + H(+). It participates in carbohydrate metabolism; glyoxylate cycle; (S)-malate from isocitrate: step 2/2. Its function is as follows. Involved in the glycolate utilization. Catalyzes the condensation and subsequent hydrolysis of acetyl-coenzyme A (acetyl-CoA) and glyoxylate to form malate and CoA. In Pseudomonas syringae pv. tomato (strain ATCC BAA-871 / DC3000), this protein is Malate synthase G 2.